Here is a 114-residue protein sequence, read N- to C-terminus: Gas vesicle protein J (114 aa).

Residues 63 to 114 form a disordered region; that stretch reads PTGTDMERVEEAAGISPDESRSLDTRSESEQMDELPGEAGASVSNTAPQEEE. A compositionally biased stretch (basic and acidic residues) spans 80 to 91; it reads DESRSLDTRSES. The span at 104-114 shows a compositional bias: polar residues; sequence SVSNTAPQEEE.

It belongs to the gas vesicle GvpA family. In terms of assembly, gvpF to GvpM interact with each other in vitro, and may form multi-subunit complex(es). Interacts with GvpA.

The protein resides in the gas vesicle. Its function is as follows. A minor component of the gas vesicle, proteins GvpF to GvpM might be involved in nucleating gas vesicle formation. Gas vesicles are hollow, gas filled proteinaceous nanostructures found in some microorganisms. They allow positioning of halobacteria at the optimal depth for growth in the poorly aerated, shallow brine pools of their habitat. In terms of biological role, expression of a 9.5 kb mc-vac DNA fragment containing 2 divergently transcribed regions (gvpD-gvpE-gvpF-gvpG-gvpH-gvpI-gvpJ-gvpK-gvpL-gvpM and gvpA-gvpC-gvpN-gvpO) allows H.volcanii to produce gas vesicles. This chain is Gas vesicle protein J, found in Haloferax mediterranei (strain ATCC 33500 / DSM 1411 / JCM 8866 / NBRC 14739 / NCIMB 2177 / R-4) (Halobacterium mediterranei).